Consider the following 65-residue polypeptide: Large ribosomal subunit protein bL32 (65 aa).

Belongs to the bacterial ribosomal protein bL32 family.

The chain is Large ribosomal subunit protein bL32 from Phytoplasma australiense.